The sequence spans 484 residues: Probable cytosol aminopeptidase (484 aa).

The Mn(2+) site is built by Lys-256 and Asp-261. Lys-268 is an active-site residue. Positions 279, 338, and 340 each coordinate Mn(2+). Residue Arg-342 is part of the active site.

This sequence belongs to the peptidase M17 family. Requires Mn(2+) as cofactor.

The protein resides in the cytoplasm. The catalysed reaction is Release of an N-terminal amino acid, Xaa-|-Yaa-, in which Xaa is preferably Leu, but may be other amino acids including Pro although not Arg or Lys, and Yaa may be Pro. Amino acid amides and methyl esters are also readily hydrolyzed, but rates on arylamides are exceedingly low.. It catalyses the reaction Release of an N-terminal amino acid, preferentially leucine, but not glutamic or aspartic acids.. Its function is as follows. Presumably involved in the processing and regular turnover of intracellular proteins. Catalyzes the removal of unsubstituted N-terminal amino acids from various peptides. This Actinobacillus succinogenes (strain ATCC 55618 / DSM 22257 / CCUG 43843 / 130Z) protein is Probable cytosol aminopeptidase.